A 343-amino-acid polypeptide reads, in one-letter code: Leucine-rich repeat-containing protein 39 (343 aa).

10 LRR repeats span residues 64–87 (EEGR…LVQL), 88–110 (SQIQ…ISSF), 111–133 (QSLI…IGKL), 134–156 (TRLR…LGCC), 158–180 (NLEK…LSNL), 181–203 (KKLS…VVNL), 204–226 (PSLE…IHRM), 228–249 (KLHT…ISRM), 250–274 (KSLD…GMSN), and 275–295 (LRFV…PDLN).

The protein localises to the cytoplasm. Its subcellular location is the myofibril. It is found in the sarcomere. The protein resides in the m line. In terms of biological role, component of the sarcomeric M-band which plays a role in myocyte response to biomechanical stress. May regulate expression of other M-band proteins via an SRF-dependent pathway. Important for normal contractile function in heart. This is Leucine-rich repeat-containing protein 39 from Danio rerio (Zebrafish).